The following is an 862-amino-acid chain: Mismatch repair endonuclease PMS2 (862 aa).

5 residues coordinate ATP: Asn45, Asp70, Glu109, Ala110, and Leu111. Composition is skewed to basic and acidic residues over residues 391 to 401, 408 to 444, 484 to 495, and 528 to 552; these read DLEKPMVEKQD, TGEE…EPRR, PTDRAEVEKDSG, and GSQE…VDCH. The segment at 391–552 is disordered; the sequence is DLEKPMVEKQ…DDSFSDVDCH (162 aa). Thr573 carries the post-translational modification Phosphothreonine. The Nuclear localization signal motif lies at 577 to 580; it reads KRFK. A Phosphothreonine modification is found at Thr597.

Belongs to the DNA mismatch repair MutL/HexB family. As to quaternary structure, heterodimer of PMS2 and MLH1 (MutL alpha); this interaction is required for the stability of both partners. Forms a ternary complex with MutS alpha (MSH2-MSH6) or MutS beta (MSH2-MSH3). Part of the BRCA1-associated genome surveillance complex (BASC), which contains BRCA1, MSH2, MSH6, MLH1, ATM, BLM, PMS2 and the RAD50-MRE11-NBS1 protein complex. This association could be a dynamic process changing throughout the cell cycle and within subnuclear domains. Interacts with MTMR15/FAN1.

It is found in the nucleus. The catalysed reaction is ATP + H2O = ADP + phosphate + H(+). Component of the post-replicative DNA mismatch repair system (MMR). Heterodimerizes with MLH1 to form MutL alpha. DNA repair is initiated by MutS alpha (MSH2-MSH6) or MutS beta (MSH2-MSH3) binding to a dsDNA mismatch, then MutL alpha is recruited to the heteroduplex. Assembly of the MutL-MutS-heteroduplex ternary complex in presence of RFC and PCNA is sufficient to activate endonuclease activity of PMS2. It introduces single-strand breaks near the mismatch and thus generates new entry points for the exonuclease EXO1 to degrade the strand containing the mismatch. DNA methylation would prevent cleavage and therefore assure that only the newly mutated DNA strand is going to be corrected. MutL alpha (MLH1-PMS2) interacts physically with the clamp loader subunits of DNA polymerase III, suggesting that it may play a role to recruit the DNA polymerase III to the site of the MMR. Also implicated in DNA damage signaling, a process which induces cell cycle arrest and can lead to apoptosis in case of major DNA damages. Possesses an ATPase activity, but in the absence of gross structural changes, ATP hydrolysis may not be necessary for proficient mismatch repair. The chain is Mismatch repair endonuclease PMS2 from Homo sapiens (Human).